Reading from the N-terminus, the 172-residue chain is Putative phosphoesterase BCE_1348 (172 aa).

Residue His-34 is the Proton donor of the active site. 2 short sequence motifs (HXTX) span residues 34 to 37 (HITL) and 115 to 118 (HLTI). The active-site Proton acceptor is His-115.

It belongs to the 2H phosphoesterase superfamily. YjcG family.

In Bacillus cereus (strain ATCC 10987 / NRS 248), this protein is Putative phosphoesterase BCE_1348.